Consider the following 777-residue polypeptide: Ribosome biogenesis protein ERB1 (777 aa).

Residues 1 to 122 form a disordered region; the sequence is MAPTAPAKKR…RPNYRVVEDA (122 aa). Residues 36 to 67 are compositionally biased toward acidic residues; that stretch reads SEDDSDFVASGDEDEEDEDEDEDEDKDEDDEH. 7 WD repeats span residues 430 to 469, 473 to 513, 562 to 604, 606 to 645, 648 to 687, 691 to 731, and 747 to 777; these read GHEGRVRSSAIDPTGLWLATGGDDGYVRIWLINPARQVWA, SSDE…PEVE, TVRS…SQIP, RKLSGLAQVAHFHPSRPLFFVATQRTIRCYDLQRLELVKV, PGARWISSFDIHPGGDNLIVGSYDRRLLWHDLDLSTRPYK, FHPQ…DLME, and VDSLGVMDVDWHPSEPWCISAGADGTCRLWM.

The protein belongs to the WD repeat BOP1/ERB1 family. In terms of assembly, component of the NOP7 complex, composed of ERB1, NOP7 and YTM1. The complex is held together by ERB1, which interacts with NOP7 via its N-terminal domain and with YTM1 via a high-affinity interaction between the seven-bladed beta-propeller domains of the 2 proteins. The NOP7 complex associates with the 66S pre-ribosome.

Its subcellular location is the nucleus. It is found in the nucleolus. It localises to the nucleoplasm. Functionally, component of the NOP7 complex, which is required for maturation of the 25S and 5.8S ribosomal RNAs and formation of the 60S ribosome. The protein is Ribosome biogenesis protein ERB1 of Pyricularia oryzae (strain 70-15 / ATCC MYA-4617 / FGSC 8958) (Rice blast fungus).